A 160-amino-acid chain; its full sequence is Putative pre-16S rRNA nuclease (160 aa).

This sequence belongs to the YqgF nuclease family.

Its subcellular location is the cytoplasm. Its function is as follows. Could be a nuclease involved in processing of the 5'-end of pre-16S rRNA. This chain is Putative pre-16S rRNA nuclease, found in Rhodopseudomonas palustris (strain BisB5).